A 193-amino-acid polypeptide reads, in one-letter code: Ion-translocating oxidoreductase complex subunit A (193 aa).

The next 6 membrane-spanning stretches (helical) occupy residues 5–25 (LLLLIGTVLVNNFVLVKFLGL), 39–59 (IGMGLATTFVLTLASVCSYLI), 63–83 (ILAPLGIEYLRTMSFILVIAV), 102–122 (VLGIFLPLITTNCAVLGVALL), 134–154 (IIYGFGAAVGFSLVLILFSAM), and 171–191 (SIAMITAGLMSLAFMGFTGLV).

The protein belongs to the NqrDE/RnfAE family. The complex is composed of six subunits: RnfA, RnfB, RnfC, RnfD, RnfE and RnfG.

It localises to the cell inner membrane. Part of a membrane-bound complex that couples electron transfer with translocation of ions across the membrane. The polypeptide is Ion-translocating oxidoreductase complex subunit A (Aliivibrio salmonicida (strain LFI1238) (Vibrio salmonicida (strain LFI1238))).